A 544-amino-acid chain; its full sequence is Cytochrome P450 2U1 (544 aa).

A run of 4 helical transmembrane segments spans residues 30–50, 113–133, 261–281, and 342–362; these read LDPS…GWSW, VYGS…LSDF, ICLN…YLPF, and LFYI…NSLL. C490 serves as a coordination point for heme. A helical transmembrane segment spans residues 495 to 515; it reads LAKMELFLMFVSLMQSFAFAL.

This sequence belongs to the cytochrome P450 family. It depends on heme as a cofactor. As to expression, widely expressed with stronger expression in thymus, heart and cerebellum.

Its subcellular location is the endoplasmic reticulum membrane. It localises to the microsome membrane. The protein resides in the mitochondrion inner membrane. The catalysed reaction is an omega-methyl-long-chain fatty acid + reduced [NADPH--hemoprotein reductase] + O2 = an omega-hydroxy-long-chain fatty acid + oxidized [NADPH--hemoprotein reductase] + H2O + H(+). It catalyses the reaction (5Z,8Z,11Z,14Z)-eicosatetraenoate + reduced [NADPH--hemoprotein reductase] + O2 = 19-hydroxy-(5Z,8Z,11Z,14Z)-eicosatetraenoate + oxidized [NADPH--hemoprotein reductase] + H2O + H(+). The enzyme catalyses (5Z,8Z,11Z,14Z)-eicosatetraenoate + reduced [NADPH--hemoprotein reductase] + O2 = 20-hydroxy-(5Z,8Z,11Z,14Z)-eicosatetraenoate + oxidized [NADPH--hemoprotein reductase] + H2O + H(+). It carries out the reaction N-[(5Z,8Z,11Z,14Z)-eicosatetraenoyl]-serotonin + reduced [NADPH--hemoprotein reductase] + O2 = 2-oxo-N-[(5Z,8Z,11Z,14Z)-eicosatetraenoyl]-serotonin + oxidized [NADPH--hemoprotein reductase] + H2O + H(+). It functions in the pathway lipid metabolism; arachidonate metabolism. Functionally, a cytochrome P450 monooxygenase involved in the metabolism of arachidonic acid and its conjugates. Mechanistically, uses molecular oxygen inserting one oxygen atom into a substrate, and reducing the second into a water molecule, with two electrons provided by NADPH via cytochrome P450 reductase (CPR; NADPH-ferrihemoprotein reductase). Acts as an omega and omega-1 hydroxylase for arachidonic acid and possibly for other long chain fatty acids. May modulate the arachidonic acid signaling pathway and play a role in other fatty acid signaling processes. May down-regulate the biological activities of N-arachidonoyl-serotonin, an endocannabinoid that has anti-nociceptive effects through inhibition of fatty acid amide hydrolase FAAH, TRPV1 receptor and T-type calcium channels. Catalyzes C-2 oxidation of the indole ring of N-arachidonoyl-serotonin forming a less active product 2-oxo-N-arachidonoyl-serotonin. The polypeptide is Cytochrome P450 2U1 (Homo sapiens (Human)).